A 576-amino-acid chain; its full sequence is Formate--tetrahydrofolate ligase 1 (576 aa).

Residue 69-76 (TPLGEGKT) participates in ATP binding.

The protein belongs to the formate--tetrahydrofolate ligase family.

It catalyses the reaction (6S)-5,6,7,8-tetrahydrofolate + formate + ATP = (6R)-10-formyltetrahydrofolate + ADP + phosphate. The protein operates within one-carbon metabolism; tetrahydrofolate interconversion. The sequence is that of Formate--tetrahydrofolate ligase 1 from Rubrobacter xylanophilus (strain DSM 9941 / JCM 11954 / NBRC 16129 / PRD-1).